The primary structure comprises 119 residues: Protein TusC (119 aa).

Belongs to the DsrF/TusC family. In terms of assembly, heterohexamer, formed by a dimer of trimers. The hexameric TusBCD complex contains 2 copies each of TusB, TusC and TusD. The TusBCD complex interacts with TusE.

The protein localises to the cytoplasm. In terms of biological role, part of a sulfur-relay system required for 2-thiolation of 5-methylaminomethyl-2-thiouridine (mnm(5)s(2)U) at tRNA wobble positions. The chain is Protein TusC from Escherichia coli O8 (strain IAI1).